Here is a 502-residue protein sequence, read N- to C-terminus: Aspartyl/glutamyl-tRNA(Asn/Gln) amidotransferase subunit B (502 aa).

A disordered region spans residues 272–293 (TRHWHEDTRSTTSGRPKSDADD).

It belongs to the GatB/GatE family. GatB subfamily. In terms of assembly, heterotrimer of A, B and C subunits.

The enzyme catalyses L-glutamyl-tRNA(Gln) + L-glutamine + ATP + H2O = L-glutaminyl-tRNA(Gln) + L-glutamate + ADP + phosphate + H(+). It carries out the reaction L-aspartyl-tRNA(Asn) + L-glutamine + ATP + H2O = L-asparaginyl-tRNA(Asn) + L-glutamate + ADP + phosphate + 2 H(+). Allows the formation of correctly charged Asn-tRNA(Asn) or Gln-tRNA(Gln) through the transamidation of misacylated Asp-tRNA(Asn) or Glu-tRNA(Gln) in organisms which lack either or both of asparaginyl-tRNA or glutaminyl-tRNA synthetases. The reaction takes place in the presence of glutamine and ATP through an activated phospho-Asp-tRNA(Asn) or phospho-Glu-tRNA(Gln). The polypeptide is Aspartyl/glutamyl-tRNA(Asn/Gln) amidotransferase subunit B (Paenarthrobacter aurescens (strain TC1)).